A 264-amino-acid chain; its full sequence is S-adenosylmethionine decarboxylase proenzyme (264 aa).

The active-site Schiff-base intermediate with substrate; via pyruvic acid is serine 112. Serine 112 carries the pyruvic acid (Ser); by autocatalysis modification. Residue histidine 117 is the Proton acceptor; for processing activity of the active site. Cysteine 140 acts as the Proton donor; for catalytic activity in catalysis.

The protein belongs to the prokaryotic AdoMetDC family. Type 2 subfamily. As to quaternary structure, heterooctamer of four alpha and four beta chains arranged as a tetramer of alpha/beta heterodimers. It depends on pyruvate as a cofactor. Post-translationally, is synthesized initially as an inactive proenzyme. Formation of the active enzyme involves a self-maturation process in which the active site pyruvoyl group is generated from an internal serine residue via an autocatalytic post-translational modification. Two non-identical subunits are generated from the proenzyme in this reaction, and the pyruvate is formed at the N-terminus of the alpha chain, which is derived from the carboxyl end of the proenzyme. The post-translation cleavage follows an unusual pathway, termed non-hydrolytic serinolysis, in which the side chain hydroxyl group of the serine supplies its oxygen atom to form the C-terminus of the beta chain, while the remainder of the serine residue undergoes an oxidative deamination to produce ammonia and the pyruvoyl group blocking the N-terminus of the alpha chain.

The enzyme catalyses S-adenosyl-L-methionine + H(+) = S-adenosyl 3-(methylsulfanyl)propylamine + CO2. The protein operates within amine and polyamine biosynthesis; S-adenosylmethioninamine biosynthesis; S-adenosylmethioninamine from S-adenosyl-L-methionine: step 1/1. Functionally, catalyzes the decarboxylation of S-adenosylmethionine to S-adenosylmethioninamine (dcAdoMet), the propylamine donor required for the synthesis of the polyamines spermine and spermidine from the diamine putrescine. This chain is S-adenosylmethionine decarboxylase proenzyme, found in Klebsiella pneumoniae (strain 342).